The sequence spans 168 residues: Photosystem I assembly protein Ycf3 (168 aa).

TPR repeat units follow at residues 35 to 68 (AFTY…EIDP), 72 to 105 (SYIL…NPFL), and 120 to 153 (GEQA…TPGN).

Belongs to the Ycf3 family.

It is found in the plastid. Its subcellular location is the chloroplast thylakoid membrane. Functionally, essential for the assembly of the photosystem I (PSI) complex. May act as a chaperone-like factor to guide the assembly of the PSI subunits. This chain is Photosystem I assembly protein Ycf3, found in Oenothera elata subsp. hookeri (Hooker's evening primrose).